Consider the following 422-residue polypeptide: Serine hydroxymethyltransferase 2 (422 aa).

(6S)-5,6,7,8-tetrahydrofolate-binding positions include L121 and G125–L127. Residue K230 is modified to N6-(pyridoxal phosphate)lysine.

The protein belongs to the SHMT family. Homodimer. Requires pyridoxal 5'-phosphate as cofactor.

It localises to the cytoplasm. It carries out the reaction (6R)-5,10-methylene-5,6,7,8-tetrahydrofolate + glycine + H2O = (6S)-5,6,7,8-tetrahydrofolate + L-serine. Its pathway is one-carbon metabolism; tetrahydrofolate interconversion. It participates in amino-acid biosynthesis; glycine biosynthesis; glycine from L-serine: step 1/1. Functionally, catalyzes the reversible interconversion of serine and glycine with tetrahydrofolate (THF) serving as the one-carbon carrier. This reaction serves as the major source of one-carbon groups required for the biosynthesis of purines, thymidylate, methionine, and other important biomolecules. Also exhibits THF-independent aldolase activity toward beta-hydroxyamino acids, producing glycine and aldehydes, via a retro-aldol mechanism. The chain is Serine hydroxymethyltransferase 2 from Agrobacterium fabrum (strain C58 / ATCC 33970) (Agrobacterium tumefaciens (strain C58)).